Reading from the N-terminus, the 194-residue chain is Imidazoleglycerol-phosphate dehydratase (194 aa).

Belongs to the imidazoleglycerol-phosphate dehydratase family.

It is found in the cytoplasm. It carries out the reaction D-erythro-1-(imidazol-4-yl)glycerol 3-phosphate = 3-(imidazol-4-yl)-2-oxopropyl phosphate + H2O. Its pathway is amino-acid biosynthesis; L-histidine biosynthesis; L-histidine from 5-phospho-alpha-D-ribose 1-diphosphate: step 6/9. The chain is Imidazoleglycerol-phosphate dehydratase from Bacillus subtilis (strain 168).